The sequence spans 58 residues: MAVPKKRTSKAKKNARKSVWKKKADKAAKKSLSLAKSVLQGKTTSFVYSLYIDELFSI.

Residues 1–23 are disordered; sequence MAVPKKRTSKAKKNARKSVWKKK.

Belongs to the bacterial ribosomal protein bL32 family.

The protein resides in the plastid. It localises to the chloroplast. This Trieres chinensis (Marine centric diatom) protein is Large ribosomal subunit protein bL32c (rpl32-A).